The primary structure comprises 513 residues: Ribonuclease Y (513 aa).

The helical transmembrane segment at Y6–D26 threads the bilayer. Residues T203–V288 enclose the KH domain. The HD domain occupies V329–A422.

This sequence belongs to the RNase Y family.

It localises to the cell membrane. In terms of biological role, endoribonuclease that initiates mRNA decay. The chain is Ribonuclease Y from Clostridium botulinum (strain Loch Maree / Type A3).